The following is a 137-amino-acid chain: Large ribosomal subunit protein uL16 (137 aa).

The segment covering 1 to 13 (MLQPSRRKYRKEQ) has biased composition (basic residues). The tract at residues 1 to 22 (MLQPSRRKYRKEQKGRNTGLAT) is disordered.

Belongs to the universal ribosomal protein uL16 family. As to quaternary structure, part of the 50S ribosomal subunit.

In terms of biological role, binds 23S rRNA and is also seen to make contacts with the A and possibly P site tRNAs. This Azoarcus sp. (strain BH72) protein is Large ribosomal subunit protein uL16.